The chain runs to 212 residues: Probable 2-dehydro-3-deoxy-6-phosphogalactonate aldolase (212 aa).

A 2-dehydro-3-deoxy-6-phospho-D-galactonate-binding site is contributed by R18. E41 (proton donor/acceptor) is an active-site residue. Residues T70, K130, G160, G180, and S181 each coordinate 2-dehydro-3-deoxy-6-phospho-D-galactonate. K130 functions as the Schiff-base intermediate with substrate in the catalytic mechanism.

It belongs to the KHG/KDPG aldolase family. In terms of assembly, homotrimer.

The enzyme catalyses 2-dehydro-3-deoxy-6-phospho-D-galactonate = D-glyceraldehyde 3-phosphate + pyruvate. The protein operates within carbohydrate acid metabolism; D-galactonate degradation; D-glyceraldehyde 3-phosphate and pyruvate from D-galactonate: step 3/3. Involved in the degradation of galactose via the DeLey-Doudoroff pathway. Catalyzes the reversible, stereospecific retro-aldol cleavage of 2-keto-3-deoxy-6-phosphogalactonate (KDPGal) to pyruvate and D-glyceraldehyde-3-phosphate. This is Probable 2-dehydro-3-deoxy-6-phosphogalactonate aldolase (dgoA) from Rhizobium meliloti (strain 1021) (Ensifer meliloti).